We begin with the raw amino-acid sequence, 985 residues long: Ras and Rab interactor 3 (985 aa).

Residues 1 to 24 (MIRHAGAPARGDPTGPVPVVGKGE) form a disordered region. An SH2 domain is found at 63–158 (WLQLSLGQAE…LLPFTLRLPQ (96 aa)). Disordered stretches follow at residues 183 to 202 (SLNP…DRAP), 251 to 293 (QPPL…QPCS), and 315 to 531 (PPVP…KGSL). A compositionally biased stretch (basic and acidic residues) spans 189–201 (ERGKPAEPPRDRA). Pro residues-rich tracts occupy residues 278–288 (RRPPPPPPVLP) and 315–336 (PPVP…PNQP). The segment covering 424–442 (DTPRESTEQGQDTEVKASD) has biased composition (basic and acidic residues). Residues 587 to 732 (FSSMFHAFLS…TTTDLGVTTS (146 aa)) are interaction with RAB5B. Positions 703 to 846 (HSKDGSLQQL…IKSYDKITVT (144 aa)) constitute a VPS9 domain. Residues 877-963 (QDFICVSYLE…RDFHFVYRPL (87 aa)) enclose the Ras-associating domain.

It belongs to the RIN (Ras interaction/interference) family. In terms of assembly, interacts with CD2AP, RAB5B, RAB31 and BIN1. Widely expressed.

It localises to the cytoplasm. Its subcellular location is the cytoplasmic vesicle. The protein resides in the early endosome. Functionally, ras effector protein that functions as a guanine nucleotide exchange (GEF) for RAB5B and RAB31, by exchanging bound GDP for free GTP. Required for normal RAB31 function. This chain is Ras and Rab interactor 3 (RIN3), found in Homo sapiens (Human).